The sequence spans 230 residues: ATP phosphoribosyltransferase (230 aa).

Belongs to the ATP phosphoribosyltransferase family. Short subfamily. As to quaternary structure, heteromultimer composed of HisG and HisZ subunits.

The protein resides in the cytoplasm. The catalysed reaction is 1-(5-phospho-beta-D-ribosyl)-ATP + diphosphate = 5-phospho-alpha-D-ribose 1-diphosphate + ATP. Its pathway is amino-acid biosynthesis; L-histidine biosynthesis; L-histidine from 5-phospho-alpha-D-ribose 1-diphosphate: step 1/9. Catalyzes the condensation of ATP and 5-phosphoribose 1-diphosphate to form N'-(5'-phosphoribosyl)-ATP (PR-ATP). Has a crucial role in the pathway because the rate of histidine biosynthesis seems to be controlled primarily by regulation of HisG enzymatic activity. The sequence is that of ATP phosphoribosyltransferase from Agrobacterium fabrum (strain C58 / ATCC 33970) (Agrobacterium tumefaciens (strain C58)).